The sequence spans 382 residues: Dodecanoyl-[acyl-carrier-protein] hydrolase, chloroplastic (382 aa).

The N-terminal 83 residues, 1 to 83 (MATTSLASAF…FSAAEKQWTN (83 aa)), are a transit peptide targeting the chloroplast. Active-site residues include N283, H285, and C320.

Belongs to the acyl-ACP thioesterase family. In terms of assembly, forms homodimers. As to expression, expressed in developing cotyledons. Not detected in leaves.

It localises to the plastid. The protein resides in the chloroplast. The enzyme catalyses dodecanoyl-[ACP] + H2O = dodecanoate + holo-[ACP] + H(+). Plays an essential role in chain termination during de novo fatty acid synthesis. High thioesterase activity for lauroyl-ACP versus other acyl-ACPs. This Umbellularia californica (California bay laurel) protein is Dodecanoyl-[acyl-carrier-protein] hydrolase, chloroplastic.